A 285-amino-acid polypeptide reads, in one-letter code: MAVPKIVLFYVFTPLADPEAIRLWQYTLAEANNLTGRILVSEHGINATVGGDIRDVKRYVKGTRSYAPFKDADIKWSDGLGDDFPRLSVKVRPEIVTFGAPGELKVDADGVVGGGTHLAPDEVHRLVEGRGDDVVFFDGRNGFEAEIGRFRDAVVPDVSTTREFVHELDSGKYDHLKDKAVVTYCTGGVRCEVLSSLMRSRGFGEVYQLDGGIVRYGEAFGDTGLWEGSLYVFDKRMSIEFSDQAKTLGRCSTCGGPTSRYENMPDDRGRELVLVCADCTENRAG.

The Rhodanese domain occupies R130–L225. C185 serves as the catalytic Cysteine persulfide intermediate.

It belongs to the TrhO family.

It carries out the reaction uridine(34) in tRNA + AH2 + O2 = 5-hydroxyuridine(34) in tRNA + A + H2O. In terms of biological role, catalyzes oxygen-dependent 5-hydroxyuridine (ho5U) modification at position 34 in tRNAs. The protein is tRNA uridine(34) hydroxylase of Rhodococcus jostii (strain RHA1).